The sequence spans 877 residues: Phosphoenolpyruvate carboxylase (877 aa).

Catalysis depends on residues H138 and K543.

It belongs to the PEPCase type 1 family. The cofactor is Mg(2+).

The enzyme catalyses oxaloacetate + phosphate = phosphoenolpyruvate + hydrogencarbonate. Forms oxaloacetate, a four-carbon dicarboxylic acid source for the tricarboxylic acid cycle. The chain is Phosphoenolpyruvate carboxylase from Aeromonas hydrophila subsp. hydrophila (strain ATCC 7966 / DSM 30187 / BCRC 13018 / CCUG 14551 / JCM 1027 / KCTC 2358 / NCIMB 9240 / NCTC 8049).